The primary structure comprises 543 residues: Cytochrome P450 monooxygenase CYP1 (543 aa).

Residues 40–60 traverse the membrane as a helical segment; sequence SSFFTRILIAFIGLCLLSIFS. 2 N-linked (GlcNAc...) asparagine glycosylation sites follow: asparagine 210 and asparagine 367. Cysteine 478 provides a ligand contact to heme. An N-linked (GlcNAc...) asparagine glycan is attached at asparagine 517.

Belongs to the cytochrome P450 family. Heme serves as cofactor.

The protein localises to the membrane. It participates in secondary metabolite biosynthesis. Functionally, cytochrome P450 monooxygenase; part of the gene cluster that mediates the biosynthesis of a tyrosine-derived cytochalasan acting as a fungal signal recognized by resistant rice plants and leads to avirulence in Pi33 resistant rice cultivars. The first step in the pathway is catalyzed by the hybrid PKS-NRPS ACE1, assisted by the enoyl reductase RAP1, that are responsible for fusion of the tyrosine precursor and the polyketide backbone. The polyketide synthase module (PKS) of ACE1 is responsible for the synthesis of the polyketide backbone and the downstream nonribosomal peptide synthetase (NRPS) amidates the carboxyl end of the polyketide with the tyrosine precursor. Because ACE1 lacks a designated enoylreductase (ER) domain, the required activity is provided the enoyl reductase RAP1. Reduction by the hydrolyase ORFZ, followed by dehydration and intra-molecular Diels-Alder cyclization by the Diels-Alderase ORF3 then yield the required isoindolone-fused macrocycle. A number of oxidative steps catalyzed by the tailoring enzymes identified within the cluster, including cytochrome P450 monooxygenases CYP1 to CYP4, the FAD-linked oxidoreductase OXR2 and the short-chain dehydrogenase/reductase OXR1, are further required to afford the final cytochalasans that confer avirulence and which have still to be identified. The monooxygenase CYP1 has been shown to be a site-selective C-18 hydroxylase whereas the function of CYP3 is the site-selective epoxidation of the C-6/C-7 olefin that is present in some intermediate compounds. Finally, SYN2 and RAP2 are not required for avirulence in Pi33 resistant rice cultivars. The chain is Cytochrome P450 monooxygenase CYP1 from Pyricularia oryzae (strain 70-15 / ATCC MYA-4617 / FGSC 8958) (Rice blast fungus).